The sequence spans 235 residues: Ribitol-5-phosphate cytidylyltransferase (235 aa).

Residues L7–G10, G82–S88, and S113 each bind CTP.

It belongs to the IspD/TarI cytidylyltransferase family. TarI subfamily.

The catalysed reaction is D-ribitol 5-phosphate + CTP + H(+) = CDP-L-ribitol + diphosphate. It functions in the pathway cell wall biogenesis; poly(ribitol phosphate) teichoic acid biosynthesis. Catalyzes the transfer of the cytidylyl group of CTP to D-ribitol 5-phosphate. The chain is Ribitol-5-phosphate cytidylyltransferase from Streptococcus pneumoniae serotype 19F (strain G54).